The primary structure comprises 516 residues: Na(+)/H(+) antiporter NhaB (516 aa).

A run of 12 helical transmembrane segments spans residues 23–43 (LALI…PFVA), 61–80 (CYPL…IGMT), 97–117 (LLLI…LFVF), 120–140 (LLLG…AAAF), 144–164 (FLDA…FYGI), 202–222 (LMMH…VGEP), 238–258 (FFIR…LTCL), 303–323 (AVIG…VGLI), 348–368 (TEAL…AVII), 391–411 (LFYL…VGTV), 447–467 (ATPN…APLI), and 475–495 (VWMA…CVEF).

The protein belongs to the NhaB Na(+)/H(+) (TC 2.A.34) antiporter family.

It localises to the cell inner membrane. The catalysed reaction is 2 Na(+)(in) + 3 H(+)(out) = 2 Na(+)(out) + 3 H(+)(in). Its function is as follows. Na(+)/H(+) antiporter that extrudes sodium in exchange for external protons. This Klebsiella pneumoniae (strain 342) protein is Na(+)/H(+) antiporter NhaB.